Here is a 221-residue protein sequence, read N- to C-terminus: Transcription antitermination protein NusB (221 aa).

Belongs to the NusB family.

In terms of biological role, involved in transcription antitermination. Required for transcription of ribosomal RNA (rRNA) genes. Binds specifically to the boxA antiterminator sequence of the ribosomal RNA (rrn) operons. The chain is Transcription antitermination protein NusB from Synechocystis sp. (strain ATCC 27184 / PCC 6803 / Kazusa).